Here is a 416-residue protein sequence, read N- to C-terminus: Probable 26S proteasome regulatory subunit rpn-6.2 (416 aa).

The PCI domain maps to 217-386; that stretch reads YKTSFSYFYE…DTVVVYPKAD (170 aa).

This sequence belongs to the proteasome subunit S9 family. As to quaternary structure, component of the lid subcomplex of the 19S proteasome regulatory particle complex (also named PA700 complex). The 26S proteasome consists of a 20S proteasome core and two 19S regulatory subunits.

Component of the lid subcomplex of the 26S proteasome, a multiprotein complex involved in the ATP-dependent degradation of ubiquitinated proteins. In the complex, rpn-6.2 is required for proteasome assembly. The protein is Probable 26S proteasome regulatory subunit rpn-6.2 (rpn-6.2) of Caenorhabditis elegans.